A 1023-amino-acid polypeptide reads, in one-letter code: Peroxisome proliferator-activated receptor gamma coactivator 1-beta (1023 aa).

Residues 1 to 91 form an abolishes DNA transcriptional activity when missing region; sequence MAGNDCGALL…LFQIDSENEA (91 aa). The disordered stretch occupies residues 122 to 148; the sequence is LSCTSASPAPSSAPPSPAPEKPSAPAP. The segment covering 132-146 has biased composition (pro residues); the sequence is SSAPPSPAPEKPSAP. The LXXLL motif 1 motif lies at 156–160; sequence LQKLL. Disordered stretches follow at residues 165 to 210, 237 to 278, and 302 to 331; these read YPTS…QSQS, LQSP…PGAP, and RKLPPQTPEPLPKACSNPSQQVRSRPWSRH. Residues 343–347 carry the LXXLL motif 2 motif; it reads LRELL. 4 disordered regions span residues 369–463, 520–567, 601–623, and 636–683; these read LTPR…LPWT, RELG…QLPP, TAGLTPPTTPPYKPTEEDPFKPD, and LPSP…GQKR. Phosphoserine is present on S384. Basic and acidic residues predominate over residues 412-422; it reads LRLEVKREVRR. The segment covering 429–450 has biased composition (acidic residues); that stretch reads QEEEDEEEEEEEEEEEKEEEEE. At S524 the chain carries Phosphoserine. The segment covering 614–623 has biased composition (basic and acidic residues); that stretch reads PTEEDPFKPD. S638 is modified (phosphoserine). The short motif at 691-694 is the HCFC1-binding-motif (HBM) element; that stretch reads DHDY. Disordered regions lie at residues 717–758 and 779–867; these read VHLE…LRDH and DLAS…WSPA. Positions 793-805 are enriched in low complexity; it reads EDSSSSSGESSFL. The span at 806-825 shows a compositional bias: acidic residues; sequence PEEEEEEGEEEEEDDEEEDS. Residues 849–866 show a composition bias toward low complexity; that stretch reads CSRSRSSSGSSPCHSWSP. Residues 902 to 976 form the RRM domain; sequence RVVYIQNLSS…RNEPSFQLSY (75 aa).

As to quaternary structure, interacts with hepatocyte nuclear factor 4-alpha/HNF4A, Sterol regulatory binding transcription factor 1/SREBF1, PPAR-alpha/PPARA, thyroid hormone receptor beta/THRB and host cell factor/HCFC1. Interacts with estrogen-related receptor gamma/ESRRG and alpha/ESRRA. Interacts with PRDM16. Interacts with estrogen receptor alpha/ESR1. In terms of tissue distribution, ubiquitous with higher expression in heart, brain and skeletal muscle.

Its subcellular location is the nucleus. Plays a role of stimulator of transcription factors and nuclear receptors activities. Activates transcriptional activity of estrogen receptor alpha, nuclear respiratory factor 1 (NRF1) and glucocorticoid receptor in the presence of glucocorticoids. May play a role in constitutive non-adrenergic-mediated mitochondrial biogenesis as suggested by increased basal oxygen consumption and mitochondrial number when overexpressed. May be involved in fat oxidation and non-oxidative glucose metabolism and in the regulation of energy expenditure. Induces the expression of PERM1 in the skeletal muscle in an ESRRA-dependent manner. This is Peroxisome proliferator-activated receptor gamma coactivator 1-beta (PPARGC1B) from Homo sapiens (Human).